The following is a 69-amino-acid chain: MKTISIRDDVYRKLLEMKDEEDSFSDVIEKLLKRKKTDIRRYFGVLKDSEVLDEIEKSLNARKSARFRV.

It belongs to the UPF0330 family.

Possibly the antitoxin component of a type II toxin-antitoxin (TA) system. The protein is Putative antitoxin AF_1481 of Archaeoglobus fulgidus (strain ATCC 49558 / DSM 4304 / JCM 9628 / NBRC 100126 / VC-16).